We begin with the raw amino-acid sequence, 346 residues long: Methionine import ATP-binding protein MetN 1 (346 aa).

One can recognise an ABC transporter domain in the interval 2–241; the sequence is IELKNVSKVF…PQHVTTKKFV (240 aa). 38–45 provides a ligand contact to ATP; that stretch reads GYSGAGKS.

It belongs to the ABC transporter superfamily. Methionine importer (TC 3.A.1.24) family. The complex is composed of two ATP-binding proteins (MetN), two transmembrane proteins (MetI) and a solute-binding protein (MetQ).

It localises to the cell membrane. The enzyme catalyses L-methionine(out) + ATP + H2O = L-methionine(in) + ADP + phosphate + H(+). The catalysed reaction is D-methionine(out) + ATP + H2O = D-methionine(in) + ADP + phosphate + H(+). Part of the ABC transporter complex MetNIQ involved in methionine import. Responsible for energy coupling to the transport system. This Bacillus cereus (strain ATCC 10987 / NRS 248) protein is Methionine import ATP-binding protein MetN 1.